A 149-amino-acid chain; its full sequence is D-aminoacyl-tRNA deacylase (149 aa).

The short motif at 137 to 138 is the Gly-cisPro motif, important for rejection of L-amino acids element; it reads GP.

It belongs to the DTD family. Homodimer.

The protein resides in the cytoplasm. The catalysed reaction is glycyl-tRNA(Ala) + H2O = tRNA(Ala) + glycine + H(+). It carries out the reaction a D-aminoacyl-tRNA + H2O = a tRNA + a D-alpha-amino acid + H(+). In terms of biological role, an aminoacyl-tRNA editing enzyme that deacylates mischarged D-aminoacyl-tRNAs. Also deacylates mischarged glycyl-tRNA(Ala), protecting cells against glycine mischarging by AlaRS. Acts via tRNA-based rather than protein-based catalysis; rejects L-amino acids rather than detecting D-amino acids in the active site. By recycling D-aminoacyl-tRNA to D-amino acids and free tRNA molecules, this enzyme counteracts the toxicity associated with the formation of D-aminoacyl-tRNA entities in vivo and helps enforce protein L-homochirality. This Thermoanaerobacter sp. (strain X514) protein is D-aminoacyl-tRNA deacylase.